Here is a 754-residue protein sequence, read N- to C-terminus: 5-methyltetrahydropteroyltriglutamate--homocysteine methyltransferase (754 aa).

Residues 17–20 (RELK) and K117 each bind 5-methyltetrahydropteroyltri-L-glutamate. L-homocysteine is bound by residues 431 to 433 (IGS) and E484. Residues 431 to 433 (IGS) and E484 each bind L-methionine. 5-methyltetrahydropteroyltri-L-glutamate-binding positions include 515-516 (RC) and W561. D599 provides a ligand contact to L-homocysteine. D599 is an L-methionine binding site. E605 is a 5-methyltetrahydropteroyltri-L-glutamate binding site. H641, C643, and E665 together coordinate Zn(2+). The Proton donor role is filled by H694. C726 contacts Zn(2+).

Belongs to the vitamin-B12 independent methionine synthase family. The cofactor is Zn(2+).

It carries out the reaction 5-methyltetrahydropteroyltri-L-glutamate + L-homocysteine = tetrahydropteroyltri-L-glutamate + L-methionine. It participates in amino-acid biosynthesis; L-methionine biosynthesis via de novo pathway; L-methionine from L-homocysteine (MetE route): step 1/1. Catalyzes the transfer of a methyl group from 5-methyltetrahydrofolate to homocysteine resulting in methionine formation. The protein is 5-methyltetrahydropteroyltriglutamate--homocysteine methyltransferase of Salmonella arizonae (strain ATCC BAA-731 / CDC346-86 / RSK2980).